The chain runs to 1519 residues: Dicer-like protein 1 (1519 aa).

The span at 1–13 (MTHQNTETASLAT) shows a compositional bias: polar residues. Residues 1 to 62 (MTHQNTETAS…KDPSQRQRQQ (62 aa)) are disordered. A compositionally biased stretch (acidic residues) spans 39–48 (SDESEGSEEE). The Helicase ATP-binding domain occupies 116-297 (LFERAKVQNT…EAARNLEALL (182 aa)). An ATP-binding site is contributed by 129–136 (LDTGSGKT). A DEAH box motif is present at residues 242–245 (DEAH). The 171-residue stretch at 431-601 (ALSSKVRVLW…QLLPEDRILH (171 aa)) folds into the Helicase C-terminal domain. The Dicer dsRNA-binding fold domain maps to 634 to 724 (AITVLARYAS…NSVYHRRLPA (91 aa)). The PAZ domain occupies 882 to 1001 (DDIEYQADMP…ICIEPLKISA (120 aa)). 2 consecutive RNase III domains span residues 1026-1184 (GLEA…LTPG) and 1235-1387 (CRRV…VDSN). 3 residues coordinate Mg(2+): E1275, D1373, and E1376. In terms of domain architecture, DRBM spans 1421–1489 (TFLHNKLTNE…SENALTELLH (69 aa)). C1433, H1460, C1501, and C1503 together coordinate Zn(2+).

The protein belongs to the helicase family. Dicer subfamily. Mg(2+) is required as a cofactor. Requires Mn(2+) as cofactor.

Functionally, dicer-like endonuclease involved in cleaving double-stranded RNA in the RNA interference (RNAi) pathway. Produces 21 to 25 bp dsRNAs (siRNAs) which target the selective destruction of homologous RNAs leading to sequence-specific suppression of gene expression, called post-transcriptional gene silencing (PTGS). Part of a broad host defense response against viral infection and transposons. This chain is Dicer-like protein 1 (dcl1), found in Aspergillus terreus (strain NIH 2624 / FGSC A1156).